The following is a 271-amino-acid chain: Peroxiredoxin-4 (271 aa).

The N-terminal stretch at 1–37 (MEALPLLAATTPDHGRHRRLLLLPLLLFLLPAGAVQG) is a signal peptide. The region spanning 79–237 (AKISKPAPYW…TLRLVQAFQY (159 aa)) is the Thioredoxin domain. Cys-124 functions as the Cysteine sulfenic acid (-SOH) intermediate in the catalytic mechanism.

Belongs to the peroxiredoxin family. AhpC/Prx1 subfamily. As to quaternary structure, homodimer; disulfide-linked, upon oxidation. 5 homodimers assemble to form a ring-like decamer. Can form heterodimers with PRDX1. In terms of processing, the enzyme can be inactivated by further oxidation of the cysteine sulfenic acid (C(P)-SOH) to sulphinic acid (C(P)-SO2H) and sulphonic acid (C(P)-SO3H) instead of its condensation to a disulfide bond.

Its subcellular location is the cytoplasm. It is found in the endoplasmic reticulum. It carries out the reaction a hydroperoxide + [thioredoxin]-dithiol = an alcohol + [thioredoxin]-disulfide + H2O. Functionally, thiol-specific peroxidase that catalyzes the reduction of hydrogen peroxide and organic hydroperoxides to water and alcohols, respectively. Plays a role in cell protection against oxidative stress by detoxifying peroxides and as sensor of hydrogen peroxide-mediated signaling events. Regulates the activation of NF-kappa-B in the cytosol by a modulation of I-kappa-B-alpha phosphorylation. This chain is Peroxiredoxin-4 (PRDX4), found in Homo sapiens (Human).